The chain runs to 362 residues: Homeobox-leucine zipper protein HOX11 (362 aa).

Positions 27 to 45 (REEAAEAGRRDHEVRRELE) are enriched in basic and acidic residues. Positions 27–179 (REEAAEAGRR…DDGGSARKKL (153 aa)) are disordered. Residues 64–75 (LTLLPMVPGLGL) show a composition bias toward low complexity. The span at 126–135 (LSSSPNNSAG) shows a compositional bias: polar residues. Residues 145-160 (HGLGGNDAAPGGGGGD) are compositionally biased toward gly residues. A DNA-binding region (homeobox) is located at residues 174–233 (SARKKLRLSKEQSAFLEESFKEHSTLNPKQKLALAKQLNLRPRQVEVWFQNRRARTKLKQ). The segment at 232–276 (KQTEVDCEYLKRCCETLTEENRRLQKELAELRALKTVHPFYMHLP) is leucine-zipper. A disordered region spans residues 301 to 330 (AATSSTAAPPAAPSSGGIAATSSSAAAAAA).

Belongs to the HD-ZIP homeobox family. Class II subfamily. As to expression, expressed in stems, leaf sheaths and blades and panicles.

The protein resides in the nucleus. Functionally, probable transcription factor. This is Homeobox-leucine zipper protein HOX11 (HOX11) from Oryza sativa subsp. japonica (Rice).